The primary structure comprises 517 residues: Pentatricopeptide repeat-containing protein At1g77360, mitochondrial (517 aa).

A mitochondrion-targeting transit peptide spans 1–59 (MKRFRIRSVDFRQLVNFFSFMRWECSSSATVWVRFNMTIRIINRQSRFCCKSFLSARLY). 10 PPR repeats span residues 133 to 163 (SVRA…MRKK), 167 to 201 (NVET…DLPP), 202 to 232 (NLVA…MRDR), 236 to 270 (DSKT…GCHP), 271 to 305 (DIVT…ICKP), 306 to 340 (TTFI…GMKA), 341 to 375 (DVAV…GVTP), 376 to 406 (NSKS…MIKV), 410 to 444 (DADT…GVFP), and 445 to 479 (SMHT…GIRP).

It belongs to the PPR family. P subfamily.

The protein localises to the mitochondrion. The protein is Pentatricopeptide repeat-containing protein At1g77360, mitochondrial of Arabidopsis thaliana (Mouse-ear cress).